We begin with the raw amino-acid sequence, 176 residues long: Japanin-like-RS (176 aa).

The first 24 residues, Met1–Gly24, serve as a signal peptide directing secretion. Intrachain disulfides connect Cys52–Cys174 and Cys138–Cys162. An N-linked (GlcNAc...) asparagine glycan is attached at Asn155.

This sequence belongs to the calycin superfamily. Lipocalin family. As to quaternary structure, homodimer; non-disulfide-linked. Each monomer accommodates one molecule of cholesterol in a pocket. In terms of tissue distribution, expressed in salivary glands.

Its subcellular location is the secreted. In terms of biological role, salivary tick protein that modulates host immune response. This protein blocks dendritic cell (DC) differentiation from monocytes. In addition, it inhibits up-regulation of costimulatory molecules and pro-inflammatory cytokines in response to stimuli and promotes up-regulation of co-inhibitory molecules and the anti-inflammatory cytokine interleukin-10. It has a pocket to accomodate cholesterol, which may have immune-modulatory roles, either directly or through interactions with the host gut microbiota. The polypeptide is Japanin-like-RS (Rhipicephalus sanguineus (Brown dog tick)).